Consider the following 427-residue polypeptide: Glutamate-1-semialdehyde 2,1-aminomutase (427 aa).

The residue at position 265 (Lys-265) is an N6-(pyridoxal phosphate)lysine.

The protein belongs to the class-III pyridoxal-phosphate-dependent aminotransferase family. HemL subfamily. As to quaternary structure, homodimer. Pyridoxal 5'-phosphate serves as cofactor.

It is found in the cytoplasm. The enzyme catalyses (S)-4-amino-5-oxopentanoate = 5-aminolevulinate. The protein operates within porphyrin-containing compound metabolism; protoporphyrin-IX biosynthesis; 5-aminolevulinate from L-glutamyl-tRNA(Glu): step 2/2. The protein is Glutamate-1-semialdehyde 2,1-aminomutase of Pseudomonas putida (strain W619).